A 400-amino-acid polypeptide reads, in one-letter code: MASTERNFLLLSLVVSALSGLVHRSDAAEISFGSCTPQQSDERGQCVHITSCPYLANLLMVEPKTPAQRILLSKSQCGLDNRVEGLVNRILVCCPQSMRGNIMDSEPTPSTRDALQQGDVLPGNDVCGFLFADRIFGGTNTTLWEFPWMVLLQYKKLFSETYTFNCGGALLNSRYVLTAGHCLASRELDKSGAVLHSVRLGEWDTRTDPDCTTQMNGQRICAPKHIDIEVEKGIIHEMYAPNSVDQRNDIALVRLKRIVSYTDYVRPICLPTDGLVQNNFVDYGMDVAGWGLTENMQPSAIKLKITVNVWNLTSCQEKYSSFKVKLDDSQMCAGGQLGVDTCGGDSGGPLMVPISTGGRDVFYIAGVTSYGTKPCGLKGWPGVYTRTGAFIDWIKQKLEP.

The signal sequence occupies residues 1–27; that stretch reads MASTERNFLLLSLVVSALSGLVHRSDA. The 61-residue stretch at 34–94 folds into the Clip domain; sequence SCTPQQSDER…GLVNRILVCC (61 aa). 6 disulfides stabilise this stretch: C35–C93, C46–C77, C52–C94, C127–C269, C166–C182, and C211–C221. The Peptidase S1 domain maps to 135–399; the sequence is IFGGTNTTLW…FIDWIKQKLE (265 aa). The N-linked (GlcNAc...) asparagine glycan is linked to N140. The active-site Charge relay system is H181. Ca(2+)-binding residues include E202, D204, T207, and D210. Catalysis depends on D249, which acts as the Charge relay system. An N-linked (GlcNAc...) asparagine glycan is attached at N311. 2 disulfides stabilise this stretch: C315/C332 and C342/C375. S346 acts as the Charge relay system in catalysis.

Belongs to the peptidase S1 family. CLIP subfamily. As to quaternary structure, in the active form, heterodimer of a light chain and a heavy chain; disulfide-linked. Proteolytically cleaved in response to Gram-negative bacterial or fungal infection; processing is likely to result in its activation. Cleavage produces a light chain containing the CLIP domain and a catalytic heavy chain which remain covalently associated through an interchain disulfide bond.

Its subcellular location is the secreted. Endopeptidase which plays a key role in innate immunity by cleaving Tl ligand spz and thereby activating the Toll pathway in response to fungal and Gram-positive bacterial infections. Acts downstream of pathogen recognition receptors PGRP-SA and GNBP1 and protease grass in response to Gram-positive bacterial infection. Acts downstream of protease psh in response to fungal infection. This is Spaetzle-processing enzyme from Drosophila melanogaster (Fruit fly).